A 225-amino-acid chain; its full sequence is LHFPL tetraspan subfamily member 2a protein (225 aa).

Helical transmembrane passes span 11 to 31 (MLWT…FLST), 99 to 119 (IFLA…IFTM), 129 to 149 (IFNV…VGLV), and 178 to 198 (AGWA…CAVF).

The protein belongs to the LHFP family.

Its subcellular location is the membrane. Functionally, plays a role in fertility. Involved in distal reproductive tract development. In Danio rerio (Zebrafish), this protein is LHFPL tetraspan subfamily member 2a protein.